A 260-amino-acid polypeptide reads, in one-letter code: Dolichol-phosphate mannosyltransferase subunit 1 (260 aa).

Ala-2 carries the N-acetylalanine modification. Phosphoserine occurs at positions 3 and 9. 11 residues coordinate GDP-alpha-D-mannose: Pro-32, Tyr-34, Glu-36, Ile-63, Asp-65, Asp-118, Ala-119, Asp-120, Arg-147, Arg-234, and Lys-240. Asp-120 is a Mg(2+) binding site. Mn(2+) is bound at residue Asp-120.

The protein belongs to the glycosyltransferase 2 family. In terms of assembly, component of the dolichol-phosphate mannose (DPM) synthase complex composed of DPM1, DPM2 and DPM3; within the complex, directly interacts with DPM3. This interaction stabilizes DPM1. The cofactor is Mg(2+). Requires Mn(2+) as cofactor. It depends on Ca(2+) as a cofactor.

The protein localises to the endoplasmic reticulum. The catalysed reaction is a di-trans,poly-cis-dolichyl phosphate + GDP-alpha-D-mannose = a di-trans,poly-cis-dolichyl beta-D-mannosyl phosphate + GDP. The protein operates within protein modification; protein glycosylation. Functionally, transfers mannose from GDP-mannose to dolichol monophosphate to form dolichol phosphate mannose (Dol-P-Man) which is the mannosyl donor in pathways leading to N-glycosylation, glycosyl phosphatidylinositol membrane anchoring, and O-mannosylation of proteins; catalytic subunit of the dolichol-phosphate mannose (DPM) synthase complex. The sequence is that of Dolichol-phosphate mannosyltransferase subunit 1 (DPM1) from Homo sapiens (Human).